The chain runs to 265 residues: Exosome complex component Rrp4 (265 aa).

The 73-residue stretch at 65–137 (GDNVIGKIVD…EVNNIDLTTK (73 aa)) folds into the S1 motif domain. The KH domain maps to 147-205 (KGGQIVKITPSRVPRVIGRGGSMINMIKKLTMTRIIVGQNGWIWVNGKNEALEKLAIEA). Positions 241-254 (EIPELEEEPQEETE) are enriched in acidic residues. Positions 241–265 (EIPELEEEPQEETEVNNNDGETRRT) are disordered.

It belongs to the RRP4 family. Component of the archaeal exosome complex. Forms a trimer of Rrp4 and/or Csl4 subunits. The trimer associates with a hexameric ring-like arrangement composed of 3 Rrp41-Rrp42 heterodimers.

The protein resides in the cytoplasm. Non-catalytic component of the exosome, which is a complex involved in RNA degradation. Increases the RNA binding and the efficiency of RNA degradation. Confers strong poly(A) specificity to the exosome. This chain is Exosome complex component Rrp4, found in Pyrococcus horikoshii (strain ATCC 700860 / DSM 12428 / JCM 9974 / NBRC 100139 / OT-3).